The following is a 362-amino-acid chain: Probable dual-specificity RNA methyltransferase RlmN (362 aa).

The Proton acceptor role is filled by Glu105. The 234-residue stretch at 111-344 (HEYGNSICVT…VTIRREQGHD (234 aa)) folds into the Radical SAM core domain. Residues Cys118 and Cys349 are joined by a disulfide bond. The [4Fe-4S] cluster site is built by Cys125, Cys129, and Cys132. Residues 175 to 176 (GE), Ser207, 230 to 232 (SLH), and Asn306 contribute to the S-adenosyl-L-methionine site. Cys349 serves as the catalytic S-methylcysteine intermediate.

It belongs to the radical SAM superfamily. RlmN family. [4Fe-4S] cluster is required as a cofactor.

The protein resides in the cytoplasm. The catalysed reaction is adenosine(2503) in 23S rRNA + 2 reduced [2Fe-2S]-[ferredoxin] + 2 S-adenosyl-L-methionine = 2-methyladenosine(2503) in 23S rRNA + 5'-deoxyadenosine + L-methionine + 2 oxidized [2Fe-2S]-[ferredoxin] + S-adenosyl-L-homocysteine. It carries out the reaction adenosine(37) in tRNA + 2 reduced [2Fe-2S]-[ferredoxin] + 2 S-adenosyl-L-methionine = 2-methyladenosine(37) in tRNA + 5'-deoxyadenosine + L-methionine + 2 oxidized [2Fe-2S]-[ferredoxin] + S-adenosyl-L-homocysteine. Functionally, specifically methylates position 2 of adenine 2503 in 23S rRNA and position 2 of adenine 37 in tRNAs. This chain is Probable dual-specificity RNA methyltransferase RlmN, found in Bacillus anthracis (strain A0248).